Here is a 152-residue protein sequence, read N- to C-terminus: MSLVIPDKFQHILRIMNTNIDGKRKVMFAMTAIKGVGRRYSNIVLKKADIDLDKRAGECTEEEVEKIVTIMSNPRQYKIPDWFLNRQKDIVDGKYSQLTSSNLDSKLREDLERLKKIRAHRGMRHYWGLRVRGQHTKTTGRRGRTVGVSKKK.

The disordered stretch occupies residues 133–152 (GQHTKTTGRRGRTVGVSKKK).

Belongs to the universal ribosomal protein uS13 family.

Its subcellular location is the cytoplasm. In terms of biological role, located at the top of the head of the 40S subunit, it contacts several helices of the 18S rRNA. This Spodoptera frugiperda (Fall armyworm) protein is Small ribosomal subunit protein uS13 (RpS18).